The primary structure comprises 382 residues: MSVASFFSSLPARPFGYKDGRGRTGMVSTTDIGRRMVKPPVLACRPIESNTYHGSVFLTKSSRSPSPSLSPTPTALDDEIVLDLKPFLIIYKSGRIERFLGTTVIPACPEVATKDVVIDPATGVSVRLYLPNVVDLPSKKLPVLVYFHGGGFVIENTGSPNYHNYLTLLAAKAGVLIVSINYRLAPEYPLPASYDDCMAGFNWVVSHSAGPALEPWLAQHGDFSQILLSGDSAGGNVTHYVAMRADAGVIEGVAIVHPYFLGSEPVGNEINDPANIEFHDKLWRLAAPDTEGLDDPLINPVAPGAPILAGLKCKRAVVFVAGNDFLVERGRMYYEALVKSGWGGEAELVQHEGVGHVFHLSDYSGDISVAMMTKLIAFLKGE.

The N-terminal 74 residues, 1-74, are a transit peptide targeting the chloroplast; the sequence is MSVASFFSSL…PSPSLSPTPT (74 aa). Residue serine 232 is the Acyl-ester intermediate of the active site. Catalysis depends on charge relay system residues aspartate 324 and histidine 356.

This sequence belongs to the AB hydrolase superfamily. In terms of assembly, homodimer. As to expression, expressed in roots, stems, leaves, petals, stamens and pistils, but not in bulb scales.

The protein localises to the plastid. The protein resides in the chloroplast. It catalyses the reaction 6-tuliposide A = tulipalin A + D-glucose. With respect to regulation, inhibited by NaF, AgNO(3), HgCl(2), CuSO(4) and phenylmethylsulfonyl fluoride (PMSF). Its function is as follows. Lactone-forming carboxylesterases, specifically catalyzing intramolecular transesterification, but not hydrolysis. Involved in the biosynthesis of tulipalins, defensive chemicals that show antimicrobial activities against a broad range of strains of bacteria and fungi. Substrates are 6-tuliposide A &gt; 6-tuliposide B. This chain is Tuliposide A-converting enzyme 2, chloroplastic (TCEA2), found in Tulipa gesneriana (Garden tulip).